The sequence spans 302 residues: Sulfate adenylyltransferase subunit 2 (302 aa).

It belongs to the PAPS reductase family. CysD subfamily. In terms of assembly, heterodimer composed of CysD, the smaller subunit, and CysN.

The enzyme catalyses sulfate + ATP + H(+) = adenosine 5'-phosphosulfate + diphosphate. It functions in the pathway sulfur metabolism; hydrogen sulfide biosynthesis; sulfite from sulfate: step 1/3. Its function is as follows. With CysN forms the ATP sulfurylase (ATPS) that catalyzes the adenylation of sulfate producing adenosine 5'-phosphosulfate (APS) and diphosphate, the first enzymatic step in sulfur assimilation pathway. APS synthesis involves the formation of a high-energy phosphoric-sulfuric acid anhydride bond driven by GTP hydrolysis by CysN coupled to ATP hydrolysis by CysD. The polypeptide is Sulfate adenylyltransferase subunit 2 (Yersinia enterocolitica serotype O:8 / biotype 1B (strain NCTC 13174 / 8081)).